The following is a 108-amino-acid chain: U-scoloptoxin(16)-Sm1a (108 aa).

Residues 1-19 (MNLFLVLFVFSFSVSQFFA) form the signal peptide.

It belongs to the scoloptoxin-16 family. In terms of processing, contains 4 disulfide bonds. As to expression, expressed by the venom gland.

Its subcellular location is the secreted. The sequence is that of U-scoloptoxin(16)-Sm1a from Scolopendra morsitans (Tanzanian blue ringleg centipede).